The following is a 112-amino-acid chain: Nitrogen regulatory protein P-II (112 aa).

Tyr51 carries the post-translational modification O-UMP-tyrosine.

This sequence belongs to the P(II) protein family. In terms of assembly, homotrimer.

Its function is as follows. In nitrogen-limiting conditions, when the ratio of Gln to 2-ketoglutarate decreases, P-II is uridylylated to P-II-UMP. P-II-UMP allows the deadenylation of glutamine synthetase (GS), thus activating the enzyme. Conversely, in nitrogen excess P-II is deuridylated and promotes the adenylation of GS. P-II indirectly controls the transcription of the GS gene (glnA). P-II prevents NR-II-catalyzed conversion of NR-I to NR-I-phosphate, the transcriptional activator of glnA. When P-II is uridylylated to P-II-UMP, these events are reversed. This is Nitrogen regulatory protein P-II (glnB) from Rhizobium etli (strain ATCC 51251 / DSM 11541 / JCM 21823 / NBRC 15573 / CFN 42).